Consider the following 157-residue polypeptide: MVYNITSSNQYQYFAAMWAEPTAMLNQCVSALSQSYQTQAARDTVRQQFSNLLSAIVTPNQRFPEAGYRVYINSAVLKPLYESLMKSFDTRNRIIETEEESRPSASEVANATQRVDDATVAIRSQIQLLLNELSNGHGLMNRAEFEVLLPWATAPAT.

This sequence belongs to the virgaviridae capsid protein family.

It localises to the virion. Functionally, capsid protein self-assembles to form rod-shaped virions about 18 nm in diameter with a central canal enclosing the viral genomic RNA. This Brassica napus (Rape) protein is Capsid protein (CP).